A 453-amino-acid polypeptide reads, in one-letter code: Ribosome biogenesis protein SSF1 (453 aa).

Residues Met-1–His-11 are compositionally biased toward basic residues. Disordered regions lie at residues Met-1–Ile-22, Lys-275–Lys-324, and Lys-374–Glu-453. The 323-residue stretch at Met-26–Ser-348 folds into the Brix domain. A compositionally biased stretch (basic and acidic residues) spans Pro-288–Glu-300. Thr-301 is modified (phosphothreonine). The span at Lys-374–Ala-398 shows a compositional bias: basic and acidic residues. Residues Lys-399–Ala-409 are compositionally biased toward basic residues. Positions Arg-410–Ala-423 are enriched in basic and acidic residues. Over residues Glu-442–Glu-453 the composition is skewed to acidic residues.

In terms of assembly, part of a complex that includes BRX1, RPF1, RPF2 and SSF1 or SSF2.

The protein localises to the nucleus. The protein resides in the nucleolus. In terms of biological role, required for biogenesis of the 60S ribosomal subunit. The chain is Ribosome biogenesis protein SSF1 (SSF1) from Saccharomyces cerevisiae (strain ATCC 204508 / S288c) (Baker's yeast).